The chain runs to 111 residues: Nascent polypeptide-associated complex protein (111 aa).

The NAC-A/B domain maps to 3-72; the sequence is GMNPRQMKKL…EEVREVLEIS (70 aa).

Belongs to the NAC-alpha family. As to quaternary structure, homodimer. Interacts with the ribosome. Binds ribosomal RNA.

Its function is as follows. Contacts the emerging nascent chain on the ribosome. This is Nascent polypeptide-associated complex protein from Thermococcus kodakarensis (strain ATCC BAA-918 / JCM 12380 / KOD1) (Pyrococcus kodakaraensis (strain KOD1)).